Here is a 194-residue protein sequence, read N- to C-terminus: Elongation factor P (194 aa).

Belongs to the elongation factor P family.

It is found in the cytoplasm. Its pathway is protein biosynthesis; polypeptide chain elongation. Functionally, involved in peptide bond synthesis. Stimulates efficient translation and peptide-bond synthesis on native or reconstituted 70S ribosomes in vitro. Probably functions indirectly by altering the affinity of the ribosome for aminoacyl-tRNA, thus increasing their reactivity as acceptors for peptidyl transferase. The polypeptide is Elongation factor P (Hydrogenobaculum sp. (strain Y04AAS1)).